The primary structure comprises 241 residues: uncharacterized protein (241 aa).

In terms of domain architecture, HTH cro/C1-type spans 32–86 (LKKWRNLFNIQQIELAKYLNVSPSVISDYEVGRRKNPGVNIIKKYVLALIEIDKE). Positions 43-62 (QIELAKYLNVSPSVISDYEV) form a DNA-binding region, H-T-H motif.

This is an uncharacterized protein from Methanocaldococcus jannaschii (strain ATCC 43067 / DSM 2661 / JAL-1 / JCM 10045 / NBRC 100440) (Methanococcus jannaschii).